The sequence spans 846 residues: Outer membrane channel protein CpnT (846 aa).

Positions 1-443 (MAPLAVDPAA…AGVRGLKERL (443 aa)) are NTD. The tract at residues 442–630 (RLEPTTPHLE…SGSEPPGLHA (189 aa)) is disordered. 2 stretches are compositionally biased toward pro residues: residues 450 to 466 (LEPP…PPRI) and 475 to 504 (APAP…PPVD). Composition is skewed to low complexity over residues 508-517 (EPVAPSSASA) and 562-586 (APAT…HSTP). Residues 651–846 (RLSDEAVDPQ…ELIRRGVLRQ (196 aa)) form a TNT region. Residues 751–846 (YGPQLDRIGG…ELIRRGVLRQ (96 aa)) form the TNT domain. The active site involves R757. R780 serves as a coordination point for NAD(+). Q822 is a catalytic residue.

As to quaternary structure, interacts with the immunity factor for TNT (IFT) homolog. In terms of processing, the C-terminal domain (TNT) is probably cleaved.

It is found in the cell outer membrane. It localises to the secreted. The protein resides in the cell surface. It carries out the reaction NAD(+) + H2O = ADP-D-ribose + nicotinamide + H(+). Its activity is regulated as follows. Glycohydrolase activity is completely inhibited by interaction with the immunity factor for TNT (IFT) homolog. This inhibition protects M.bovis from self-poisoning. The N-terminal domain (NTD) forms an outer membrane channel and is used for uptake of nutrients across the outer membrane. Also confers susceptibility to structurally different antibiotics and antituberculosis drugs, and to toxic immune factors such as nitric oxide (NO). The C-terminal domain (TNT) is dispensable for normal growth in macrophages. The sequence is that of Outer membrane channel protein CpnT from Mycobacterium bovis (strain BCG / Pasteur 1173P2).